A 362-amino-acid chain; its full sequence is uncharacterized protein (362 aa).

7 helical membrane-spanning segments follow: residues 32 to 52 (GAGWACGVTVVLTPPGTVGAV), 75 to 95 (FVDAVLLAGGSAYGLAAADGV), 106 to 126 (VVMLGGVVPIVPGAVIFDLSV), 148 to 168 (AAVGGQDATVAVGTVGAGVGA), 176 to 196 (GVGTASITLESGPTVGAVVVV), 287 to 307 (VFALATGAVEATATADVPVAM), and 329 to 349 (VLVAVLAAESVAGIPTYCGMF).

Belongs to the peptidase S58 family.

Its subcellular location is the cell membrane. Its function is as follows. Aminopeptidase. This is an uncharacterized protein from Mycobacterium leprae (strain TN).